We begin with the raw amino-acid sequence, 263 residues long: 3-methyl-2-oxobutanoate hydroxymethyltransferase (263 aa).

Residues D43 and D82 each contribute to the Mg(2+) site. 3-methyl-2-oxobutanoate is bound by residues 43 to 44 (DS), D82, and K111. E113 contacts Mg(2+). E180 serves as the catalytic Proton acceptor.

It belongs to the PanB family. In terms of assembly, homodecamer; pentamer of dimers. Mg(2+) serves as cofactor.

It localises to the cytoplasm. The enzyme catalyses 3-methyl-2-oxobutanoate + (6R)-5,10-methylene-5,6,7,8-tetrahydrofolate + H2O = 2-dehydropantoate + (6S)-5,6,7,8-tetrahydrofolate. It functions in the pathway cofactor biosynthesis; (R)-pantothenate biosynthesis; (R)-pantoate from 3-methyl-2-oxobutanoate: step 1/2. Catalyzes the reversible reaction in which hydroxymethyl group from 5,10-methylenetetrahydrofolate is transferred onto alpha-ketoisovalerate to form ketopantoate. This chain is 3-methyl-2-oxobutanoate hydroxymethyltransferase, found in Bdellovibrio bacteriovorus (strain ATCC 15356 / DSM 50701 / NCIMB 9529 / HD100).